The primary structure comprises 205 residues: MANTLYDRTIAFAGICQAVALVQQVARNGHCDQDAFETSMNAILNTNPANTIGVFGREADLKLGLECLVKGIDSTPSGSEITRYIISLMALERKLTARTDAMSQLGDRIQMAKRQTEHFELLEDQMISNLASIYLDVVSPIGPRIQVTGTPSVLQQTANQHKVRALLLSGIRSAVLWRQVGGKRRHLIFGRKKMVEQAQILLARM.

This sequence belongs to the HflD family.

It localises to the cytoplasm. Its subcellular location is the cell inner membrane. The chain is High frequency lysogenization protein HflD homolog from Vibrio parahaemolyticus serotype O3:K6 (strain RIMD 2210633).